The chain runs to 108 residues: DNA-directed RNA polymerase III subunit RPC10 (108 aa).

Residues cysteine 5, cysteine 8, cysteine 25, cysteine 28, cysteine 69, and cysteine 72 each contribute to the Zn(2+) site. The segment at 5-28 adopts a C4-type zinc-finger fold; it reads CPGCGNGLIVEEGQRCHRFACNTC. The segment at 65–107 adopts a TFIIS-type zinc-finger fold; the sequence is TAEPCPKCEHPRAYFMQLQTRSADEPMTTFYKCCNAQCGHRWR. The short motif at 88-89 is the Hairpin element; the sequence is DE. Residues cysteine 98 and cysteine 102 each contribute to the Zn(2+) site.

The protein belongs to the archaeal RpoM/eukaryotic RPA12/RPB9/RPC11 RNA polymerase family. In terms of assembly, component of the RNA polymerase III complex consisting of 17 subunits: a ten-subunit horseshoe-shaped catalytic core composed of POLR3A/RPC1, POLR3B/RPC2, POLR1C/RPAC1, POLR1D/RPAC2, POLR3K/RPC10, POLR2E/RPABC1, POLR2F/RPABC2, POLR2H/RPABC3, POLR2K/RPABC4 and POLR2L/RPABC5; a mobile stalk composed of two subunits POLR3H/RPC8 and CRCP/RPC9, protruding from the core and functioning primarily in transcription initiation; and additional subunits homologous to general transcription factors of the RNA polymerase II machinery, POLR3C/RPC3-POLR3F/RPC6-POLR3G/RPC7 heterotrimer required for transcription initiation and POLR3D/RPC4-POLR3E/RPC5 heterodimer involved in both transcription initiation and termination.

The protein localises to the nucleus. Functionally, core component of RNA polymerase III (Pol III) which synthesizes small non-coding RNAs using the four ribonucleoside triphosphates as substrates. Can mediate Pol I proofreading of the nascent RNA transcript. Anchors into the Pol III active site to constantly monitor transcription fidelity, cleaves mis-incorporated 5'-ribonucleotides and restarts the transcription process. Once Pol III reaches the poly(dT) termination signal, can induce Pol III clamp opening and transcription termination. Pol III plays an important role in sensing and limiting infection by intracellular bacteria and DNA viruses. Acts as a nuclear and cytosolic DNA sensor involved in innate immune response. Can sense non-self dsDNA that serves as template for transcription into dsRNA. The non-self RNA polymerase III transcripts, such as Epstein-Barr virus-encoded RNAs (EBERs) induce type I interferon and NF-kappa-B through the RIG-I pathway. This is DNA-directed RNA polymerase III subunit RPC10 from Mus musculus (Mouse).